A 173-amino-acid chain; its full sequence is Large ribosomal subunit protein bL17 (173 aa).

The interval 136–173 (AEEEAPAVEAEATEATEAPVEEAAAVEAEAPADAEKAE) is disordered. Acidic residues predominate over residues 138-149 (EEAPAVEAEATE). Residues 150-166 (ATEAPVEEAAAVEAEAP) show a composition bias toward low complexity.

This sequence belongs to the bacterial ribosomal protein bL17 family. In terms of assembly, part of the 50S ribosomal subunit. Contacts protein L32.

The protein is Large ribosomal subunit protein bL17 of Bifidobacterium longum subsp. infantis (strain ATCC 15697 / DSM 20088 / JCM 1222 / NCTC 11817 / S12).